A 91-amino-acid polypeptide reads, in one-letter code: Virion membrane protein A14 homolog (91 aa).

At 1–12 (MDPLGFFRNRPS) the chain is on the intravirion side. The chain crosses the membrane as a helical span at residues 13-33 (YVVVFGIILLIVACICAYIEL). Over 34 to 46 (SKSGKPADSALRS) the chain is Virion surface. The chain crosses the membrane as a helical span at residues 47–67 (ISIISFILAILLLLGIILFSG). The Intravirion portion of the chain corresponds to 68–91 (YNRYCTGNVVDESRYATSPGTEIQ).

The protein belongs to the chordopoxvirinae A14 family. In terms of assembly, homodimer; disulfide-linked. Interacts with A17. Phosphorylated by viral F10 kinase, phosphorylation state is regulated by H1 phosphatase.

Its subcellular location is the virion membrane. In terms of biological role, envelope protein which is a major component of the mature virion (MV) membrane. Essential for membrane biogenesis. Is required, together with A17, to form bona fide crescents, which can progress to form the immature virion (IV) membrane. A14 and A17 form a lattice that is stabilized by disulfide bonds and serves as an anchor within the viral membrane to which several other proteins important in virion structure and morphogenesis attach. This is Virion membrane protein A14 homolog from Fowlpox virus (strain NVSL) (FPV).